The sequence spans 90 residues: [Leu8]-phyllolitorin (90 aa).

The N-terminal stretch at 1-30 is a signal peptide; that stretch reads MSAVPFTRVLLISGFLAHLLLSTFVTLTVC. The propeptide occupies 31 to 48; the sequence is KEVTEESDDLSKRNVLQR. Residue Gln49 is modified to Pyrrolidone carboxylic acid. Methionine amide is present on Met57. Positions 61–90 are excised as a propeptide; sequence SLENTNRRSDEDMEISALFRGSPLKVKRSD.

The protein belongs to the bombesin/neuromedin-B/ranatensin family. As to expression, expressed by the skin glands.

It localises to the secreted. This Phyllomedusa sauvagei (Sauvage's leaf frog) protein is [Leu8]-phyllolitorin.